Consider the following 436-residue polypeptide: Methylenetetrahydrofolate--tRNA-(uracil-5-)-methyltransferase TrmFO (436 aa).

7–12 (GAGLAG) is an FAD binding site.

Belongs to the MnmG family. TrmFO subfamily. FAD serves as cofactor.

It localises to the cytoplasm. The enzyme catalyses uridine(54) in tRNA + (6R)-5,10-methylene-5,6,7,8-tetrahydrofolate + NADH + H(+) = 5-methyluridine(54) in tRNA + (6S)-5,6,7,8-tetrahydrofolate + NAD(+). It catalyses the reaction uridine(54) in tRNA + (6R)-5,10-methylene-5,6,7,8-tetrahydrofolate + NADPH + H(+) = 5-methyluridine(54) in tRNA + (6S)-5,6,7,8-tetrahydrofolate + NADP(+). In terms of biological role, catalyzes the folate-dependent formation of 5-methyl-uridine at position 54 (M-5-U54) in all tRNAs. This Caldicellulosiruptor bescii (strain ATCC BAA-1888 / DSM 6725 / KCTC 15123 / Z-1320) (Anaerocellum thermophilum) protein is Methylenetetrahydrofolate--tRNA-(uracil-5-)-methyltransferase TrmFO.